We begin with the raw amino-acid sequence, 267 residues long: Urease accessory protein UreD 2 (267 aa).

This sequence belongs to the UreD family. In terms of assembly, ureD, UreF and UreG form a complex that acts as a GTP-hydrolysis-dependent molecular chaperone, activating the urease apoprotein by helping to assemble the nickel containing metallocenter of UreC. The UreE protein probably delivers the nickel.

It localises to the cytoplasm. Required for maturation of urease via the functional incorporation of the urease nickel metallocenter. The protein is Urease accessory protein UreD 2 of Synechococcus sp. (strain JA-3-3Ab) (Cyanobacteria bacterium Yellowstone A-Prime).